The sequence spans 188 residues: Large ribosomal subunit protein eL18z (188 aa).

It belongs to the eukaryotic ribosomal protein eL18 family.

The protein is Large ribosomal subunit protein eL18z (RPL18A) of Arabidopsis thaliana (Mouse-ear cress).